The chain runs to 78 residues: Large ribosomal subunit protein bL28 (78 aa).

It belongs to the bacterial ribosomal protein bL28 family.

The sequence is that of Large ribosomal subunit protein bL28 (rpmB) from Treponema pallidum (strain Nichols).